The primary structure comprises 412 residues: Multifunctional CCA protein (412 aa).

2 residues coordinate ATP: G8 and R11. CTP-binding residues include G8 and R11. D21 and D23 together coordinate Mg(2+). Residues R91, R137, and R140 each coordinate ATP. 3 residues coordinate CTP: R91, R137, and R140. In terms of domain architecture, HD spans 228-329 (TGIHTLMTLS…VKLFDSIDAW (102 aa)).

Belongs to the tRNA nucleotidyltransferase/poly(A) polymerase family. Bacterial CCA-adding enzyme type 1 subfamily. In terms of assembly, monomer. Can also form homodimers and oligomers. The cofactor is Mg(2+). Requires Ni(2+) as cofactor.

The enzyme catalyses a tRNA precursor + 2 CTP + ATP = a tRNA with a 3' CCA end + 3 diphosphate. It carries out the reaction a tRNA with a 3' CCA end + 2 CTP + ATP = a tRNA with a 3' CCACCA end + 3 diphosphate. Its function is as follows. Catalyzes the addition and repair of the essential 3'-terminal CCA sequence in tRNAs without using a nucleic acid template. Adds these three nucleotides in the order of C, C, and A to the tRNA nucleotide-73, using CTP and ATP as substrates and producing inorganic pyrophosphate. tRNA 3'-terminal CCA addition is required both for tRNA processing and repair. Also involved in tRNA surveillance by mediating tandem CCA addition to generate a CCACCA at the 3' terminus of unstable tRNAs. While stable tRNAs receive only 3'-terminal CCA, unstable tRNAs are marked with CCACCA and rapidly degraded. In Escherichia coli O6:K15:H31 (strain 536 / UPEC), this protein is Multifunctional CCA protein.